A 491-amino-acid polypeptide reads, in one-letter code: Ketol-acid reductoisomerase (NADP(+)) (491 aa).

The KARI N-terminal Rossmann domain maps to 15 to 208; the sequence is AQLGKCRFMG…GGHRAGVLES (194 aa). Residues 45-48, arginine 68, arginine 76, serine 78, and 108-110 contribute to the NADP(+) site; these read CGAQ and DKQ. Histidine 132 is an active-site residue. NADP(+) is bound at residue glycine 158. 2 consecutive KARI C-terminal knotted domains span residues 209 to 344 and 345 to 484; these read SFVA…TAPQ and YEGK…MTDM. Mg(2+)-binding residues include aspartate 217, glutamate 221, glutamate 389, and glutamate 393. A substrate-binding site is contributed by serine 414.

The protein belongs to the ketol-acid reductoisomerase family. Requires Mg(2+) as cofactor.

It catalyses the reaction (2R)-2,3-dihydroxy-3-methylbutanoate + NADP(+) = (2S)-2-acetolactate + NADPH + H(+). It carries out the reaction (2R,3R)-2,3-dihydroxy-3-methylpentanoate + NADP(+) = (S)-2-ethyl-2-hydroxy-3-oxobutanoate + NADPH + H(+). Its pathway is amino-acid biosynthesis; L-isoleucine biosynthesis; L-isoleucine from 2-oxobutanoate: step 2/4. It participates in amino-acid biosynthesis; L-valine biosynthesis; L-valine from pyruvate: step 2/4. Its function is as follows. Involved in the biosynthesis of branched-chain amino acids (BCAA). Catalyzes an alkyl-migration followed by a ketol-acid reduction of (S)-2-acetolactate (S2AL) to yield (R)-2,3-dihydroxy-isovalerate. In the isomerase reaction, S2AL is rearranged via a Mg-dependent methyl migration to produce 3-hydroxy-3-methyl-2-ketobutyrate (HMKB). In the reductase reaction, this 2-ketoacid undergoes a metal-dependent reduction by NADPH to yield (R)-2,3-dihydroxy-isovalerate. In Escherichia coli (strain ATCC 8739 / DSM 1576 / NBRC 3972 / NCIMB 8545 / WDCM 00012 / Crooks), this protein is Ketol-acid reductoisomerase (NADP(+)).